The primary structure comprises 228 residues: Urease accessory protein UreF (228 aa).

This sequence belongs to the UreF family. UreD, UreF and UreG form a complex that acts as a GTP-hydrolysis-dependent molecular chaperone, activating the urease apoprotein by helping to assemble the nickel containing metallocenter of UreC. The UreE protein probably delivers the nickel.

It localises to the cytoplasm. Functionally, required for maturation of urease via the functional incorporation of the urease nickel metallocenter. The sequence is that of Urease accessory protein UreF from Yersinia pestis bv. Antiqua (strain Antiqua).